Consider the following 578-residue polypeptide: PX domain-containing protein kinase-like protein (578 aa).

The PX domain occupies 14-126; sequence LDDTVPLTAA…KFLDPNNYSA (113 aa). One can recognise a Protein kinase domain in the interval 88 to 481; sequence FIAERQKGLQ…LENSEEHSAK (394 aa). Composition is skewed to basic residues over residues 437-448 and 457-469; these read IHQHRRLTRAQS and KKRKILARKKSKR. Disordered stretches follow at residues 437-548 and 559-578; these read IHQH…NGMS and FQKGTLRKAKTCDHSAPKIG. Over residues 483-513 the composition is skewed to low complexity; the sequence is SNSNNSAGSGASSPLTSPSSPTPPSTSGISA. Over residues 514-530 the composition is skewed to pro residues; it reads LPPPPPPPPPPAAPLPP. Residues 548–567 enclose the WH2 domain; sequence SRGALLSSIQNFQKGTLRKA. Over residues 568 to 578 the composition is skewed to basic and acidic residues; the sequence is KTCDHSAPKIG.

Belongs to the protein kinase superfamily. In terms of tissue distribution, widely expressed in all tissues examined except in heart. Isoform 1 is expressed in high levels in the brain, skeletal muscle, spleen and testis. Isoform 7 expression has yet to be demonstrated.

The protein resides in the cytoplasm. It is found in the cell membrane. In terms of biological role, binds to and modulates brain Na,K-ATPase subunits ATP1B1 and ATP1B3 and may thereby participate in the regulation of electrical excitability and synaptic transmission. May not display kinase activity. The sequence is that of PX domain-containing protein kinase-like protein from Homo sapiens (Human).